Consider the following 98-residue polypeptide: Large ribosomal subunit protein eL21 (98 aa).

A disordered region spans residues 1–23; sequence MVDRKGKGFRRKTRDKLSKHPRQ. The span at 7-23 shows a compositional bias: basic residues; sequence KGFRRKTRDKLSKHPRQ.

The protein belongs to the eukaryotic ribosomal protein eL21 family.

The polypeptide is Large ribosomal subunit protein eL21 (Nanoarchaeum equitans (strain Kin4-M)).